A 1024-amino-acid polypeptide reads, in one-letter code: Myosin phosphatase Rho-interacting protein (1024 aa).

The segment at 1 to 382 is interaction with F-actin; that stretch reads MSAAKENPCR…DRRSTESSMT (382 aa). The region spanning 43–150 is the PH 1 domain; the sequence is KPIYGGWLLL…WLEMLMVYPR (108 aa). The tract at residues 152-262 is disordered; the sequence is NKQNQKKKRK…GDRVDGGRKV (111 aa). The span at 179–190 shows a compositional bias: low complexity; the sequence is SSSGGSSGSSSS. A phosphoserine mark is found at S193, S219, S221, S225, and S227. Over residues 221 to 233 the composition is skewed to low complexity; that stretch reads SPAQSPSQSQPPA. The span at 240 to 262 shows a compositional bias: basic and acidic residues; sequence PGLESKEDESTISGDRVDGGRKV. Phosphoserine occurs at positions 266, 270, 289, and 292. Disordered stretches follow at residues 274–301 and 328–379; these read AKQDLRAEEQLPPLLSPPSPSTPHSRRS and PSSD…STES. A Phosphothreonine modification is found at T295. Residues 333-349 show a composition bias toward basic and acidic residues; that stretch reads RQGRSERRAIPRKRDFA. Position 364 is a phosphoserine (S364). Positions 386–482 constitute a PH 2 domain; sequence LNFKKGWLTK…WIQTIMKHVL (97 aa). The disordered stretch occupies residues 486–583; sequence APDVTSSLPE…AEPGELERER (98 aa). Polar residues predominate over residues 488 to 508; it reads DVTSSLPEGKNKSTSFETCSR. Residue S492 is modified to Phosphoserine. The segment covering 522–545 has biased composition (basic and acidic residues); the sequence is PEQKKSRARERRREGRSKTFDWAE. An interaction with RHOA region spans residues 545–823; it reads EFRPIQQALA…SVQRELEVLS (279 aa). S617 is modified (phosphoserine). T645 bears the Phosphothreonine mark. Residues 672-976 adopt a coiled-coil conformation; it reads HELTSLLEKE…AATEALGEKS (305 aa). Residue S799 is modified to Phosphoserine. An interaction with PPP1R12A region spans residues 823 to 878; the sequence is SEQYSQKCLENAHLAQALEAERQALRQCQRENQELNAHNQELNNRLAAEITRLRTL. Residues 972-995 are disordered; it reads LGEKSPEGTTVSGYDIMKSKSNPD. Phosphoserine occurs at positions 976, 979, 992, 1013, and 1015.

In terms of assembly, binds RHOA, PPP1R12A/MBS and PPP1R12C/MBS85 through adjacent coiled coil domains. Interacts with MYZAP. Binds F-actin through its N-terminus. In terms of tissue distribution, expressed in Kidney, Brain, Heart and Lung.

It localises to the cytoplasm. The protein resides in the cytoskeleton. Its function is as follows. Targets myosin phosphatase to the actin cytoskeleton. Required for the regulation of the actin cytoskeleton by RhoA and ROCK1. Depletion leads to an increased number of stress fibers in smooth muscle cells through stabilization of actin fibers by phosphorylated myosin. Overexpression of MRIP as well as its F-actin-binding region leads to disassembly of stress fibers in neuronal cells. The sequence is that of Myosin phosphatase Rho-interacting protein (Mprip) from Mus musculus (Mouse).